Consider the following 514-residue polypeptide: 2,3-bisphosphoglycerate-independent phosphoglycerate mutase (514 aa).

The Mn(2+) site is built by aspartate 14 and serine 64. Serine 64 acts as the Phosphoserine intermediate in catalysis. Substrate-binding positions include histidine 125, 155–156 (RD), arginine 187, arginine 193, 263–266 (RADR), and lysine 337. Residues aspartate 404, histidine 408, aspartate 445, histidine 446, and histidine 464 each coordinate Mn(2+).

Belongs to the BPG-independent phosphoglycerate mutase family. In terms of assembly, monomer. Mn(2+) is required as a cofactor.

The catalysed reaction is (2R)-2-phosphoglycerate = (2R)-3-phosphoglycerate. It functions in the pathway carbohydrate degradation; glycolysis; pyruvate from D-glyceraldehyde 3-phosphate: step 3/5. Catalyzes the interconversion of 2-phosphoglycerate and 3-phosphoglycerate. The chain is 2,3-bisphosphoglycerate-independent phosphoglycerate mutase from Serratia proteamaculans (strain 568).